Here is a 136-residue protein sequence, read N- to C-terminus: Flagellar assembly factor FliW 2 (136 aa).

It belongs to the FliW family. Interacts with translational regulator CsrA and flagellin(s).

The protein resides in the cytoplasm. In terms of biological role, acts as an anti-CsrA protein, binds CsrA and prevents it from repressing translation of its target genes, one of which is flagellin. Binds to flagellin and participates in the assembly of the flagellum. This chain is Flagellar assembly factor FliW 2, found in Wolinella succinogenes (strain ATCC 29543 / DSM 1740 / CCUG 13145 / JCM 31913 / LMG 7466 / NCTC 11488 / FDC 602W) (Vibrio succinogenes).